Reading from the N-terminus, the 194-residue chain is Putative manganese efflux pump MntP (194 aa).

A run of 6 helical transmembrane segments spans residues Phe-3–Cys-23, Gly-40–Tyr-60, Ile-65–Ile-85, Leu-109–Phe-129, Ile-134–Leu-154, and Ile-169–Leu-189.

The protein belongs to the MntP (TC 9.B.29) family.

The protein localises to the cell inner membrane. In terms of biological role, probably functions as a manganese efflux pump. The polypeptide is Putative manganese efflux pump MntP (Proteus mirabilis (strain HI4320)).